An 89-amino-acid chain; its full sequence is Small ribosomal subunit protein uS14 (89 aa).

This sequence belongs to the universal ribosomal protein uS14 family. Part of the 30S ribosomal subunit. Contacts proteins S3 and S10.

Functionally, binds 16S rRNA, required for the assembly of 30S particles and may also be responsible for determining the conformation of the 16S rRNA at the A site. The protein is Small ribosomal subunit protein uS14 of Chlorobium phaeovibrioides (strain DSM 265 / 1930) (Prosthecochloris vibrioformis (strain DSM 265)).